Reading from the N-terminus, the 451-residue chain is Phosphoglucosamine mutase (451 aa).

Residue Ser-101 is the Phosphoserine intermediate of the active site. Mg(2+) contacts are provided by Ser-101, Asp-240, Asp-242, and Asp-244. Position 101 is a phosphoserine (Ser-101).

This sequence belongs to the phosphohexose mutase family. Mg(2+) serves as cofactor. Activated by phosphorylation.

It carries out the reaction alpha-D-glucosamine 1-phosphate = D-glucosamine 6-phosphate. Its function is as follows. Catalyzes the conversion of glucosamine-6-phosphate to glucosamine-1-phosphate. In Streptococcus pyogenes serotype M12 (strain MGAS2096), this protein is Phosphoglucosamine mutase.